The primary structure comprises 280 residues: Phosphatidylglycerol--prolipoprotein diacylglyceryl transferase (280 aa).

The next 4 helical transmembrane spans lie at Phe-12 to Leu-32, Leu-52 to Glu-72, Ile-86 to Leu-106, and Phe-115 to Gly-133. Arg-134 lines the a 1,2-diacyl-sn-glycero-3-phospho-(1'-sn-glycerol) pocket. 3 helical membrane passes run Pro-173–Phe-193, Leu-203–Ile-223, and Ile-246–Tyr-266.

Belongs to the Lgt family.

Its subcellular location is the cell inner membrane. The enzyme catalyses L-cysteinyl-[prolipoprotein] + a 1,2-diacyl-sn-glycero-3-phospho-(1'-sn-glycerol) = an S-1,2-diacyl-sn-glyceryl-L-cysteinyl-[prolipoprotein] + sn-glycerol 1-phosphate + H(+). The protein operates within protein modification; lipoprotein biosynthesis (diacylglyceryl transfer). In terms of biological role, catalyzes the transfer of the diacylglyceryl group from phosphatidylglycerol to the sulfhydryl group of the N-terminal cysteine of a prolipoprotein, the first step in the formation of mature lipoproteins. The polypeptide is Phosphatidylglycerol--prolipoprotein diacylglyceryl transferase (Synechococcus sp. (strain CC9902)).